We begin with the raw amino-acid sequence, 344 residues long: tRNA N6-adenosine threonylcarbamoyltransferase (344 aa).

Fe cation-binding residues include His119 and His123. Substrate is bound by residues 141–145 (VVSGG), Asp174, Gly187, Asp191, and Asn280. Residue Asp310 coordinates Fe cation.

It belongs to the KAE1 / TsaD family. It depends on Fe(2+) as a cofactor.

It localises to the cytoplasm. It carries out the reaction L-threonylcarbamoyladenylate + adenosine(37) in tRNA = N(6)-L-threonylcarbamoyladenosine(37) in tRNA + AMP + H(+). Required for the formation of a threonylcarbamoyl group on adenosine at position 37 (t(6)A37) in tRNAs that read codons beginning with adenine. Is involved in the transfer of the threonylcarbamoyl moiety of threonylcarbamoyl-AMP (TC-AMP) to the N6 group of A37, together with TsaE and TsaB. TsaD likely plays a direct catalytic role in this reaction. This chain is tRNA N6-adenosine threonylcarbamoyltransferase, found in Listeria monocytogenes serovar 1/2a (strain ATCC BAA-679 / EGD-e).